Here is a 163-residue protein sequence, read N- to C-terminus: MALLGNEKIYLSEETYNKYKNEYTELVTVERPAVQASLKEARAQGDLSENAEYDAARDRQSEVERRILELERILENAEIIDTKSAVQNKAGIGATVRYLNMKTNKELVVTIMGPHDSNPIENKISNESPVAQAIMEANGIGDVVEVEVPQKYNIKVLDISYAK.

Residues 49-80 (ENAEYDAARDRQSEVERRILELERILENAEII) adopt a coiled-coil conformation.

This sequence belongs to the GreA/GreB family.

In terms of biological role, necessary for efficient RNA polymerase transcription elongation past template-encoded arresting sites. The arresting sites in DNA have the property of trapping a certain fraction of elongating RNA polymerases that pass through, resulting in locked ternary complexes. Cleavage of the nascent transcript by cleavage factors such as GreA or GreB allows the resumption of elongation from the new 3'terminus. GreA releases sequences of 2 to 3 nucleotides. This chain is Transcription elongation factor GreA, found in Mycoplasmopsis agalactiae (strain NCTC 10123 / CIP 59.7 / PG2) (Mycoplasma agalactiae).